Reading from the N-terminus, the 68-residue chain is Large ribosomal subunit protein bL31 (68 aa).

Cys-16, Cys-18, Cys-37, and Cys-40 together coordinate Zn(2+).

It belongs to the bacterial ribosomal protein bL31 family. Type A subfamily. Part of the 50S ribosomal subunit. Zn(2+) is required as a cofactor.

Functionally, binds the 23S rRNA. This chain is Large ribosomal subunit protein bL31, found in Nitrosococcus oceani (strain ATCC 19707 / BCRC 17464 / JCM 30415 / NCIMB 11848 / C-107).